Reading from the N-terminus, the 146-residue chain is Hemoglobin subunit beta (146 aa).

Positions 2–146 (HWTAEEKQLI…VAHALARKYH (145 aa)) constitute a Globin domain. Residues histidine 63 and histidine 92 each contribute to the heme b site.

This sequence belongs to the globin family. Heterotetramer of two alpha chains and two beta chains. In terms of tissue distribution, red blood cells.

Functionally, involved in oxygen transport from the lung to the various peripheral tissues. The polypeptide is Hemoglobin subunit beta (HBB) (Aegypius monachus (Cinereous vulture)).